Here is a 609-residue protein sequence, read N- to C-terminus: X-ray repair cross-complementing protein 6 (609 aa).

The segment at 1-28 (MSGWESYYKTEGDEEAEEEQEENLEASG) is disordered. An N-acetylserine modification is found at Ser2. Ser2 is subject to Phosphoserine. Ser6 carries the post-translational modification Phosphoserine; by PRKDC. A compositionally biased stretch (acidic residues) spans 12 to 24 (GDEEAEEEQEENL). Phosphoserine is present on Ser27. Residue Lys31 is the Schiff-base intermediate with DNA; for 5'-deoxyribose-5-phosphate lyase activity of the active site. Lys31 carries the N6-acetyllysine modification. The residue at position 51 (Ser51) is a Phosphoserine; by PRKDC. The Ku domain occupies 261–468 (LKLNKDIVIS…VGKMKAIVEK (208 aa)). A DNA-binding region spans residues 277–341 (VQKALKPPPI…EETEELKRFD (65 aa)). Residue Lys287 forms a Glycyl lysine isopeptide (Lys-Gly) (interchain with G-Cter in SUMO2) linkage. A Phosphoserine modification is found at Ser306. Lys317, Lys331, and Lys338 each carry N6-acetyllysine. Lys317 participates in a covalent cross-link: Glycyl lysine isopeptide (Lys-Gly) (interchain with G-Cter in SUMO2). The tract at residues 373-482 (SLVIGSSTLF…YRSDSFENPV (110 aa)) is interaction with XRCC5. Thr455 bears the Phosphothreonine mark. At Lys461 the chain carries N6-acetyllysine. 2 positions are modified to phosphoserine: Ser477 and Ser520. Residues 536 to 562 (PEGKVTKRKHDNEGSGSKRPKVEYSEE) form a disordered region. 3 positions are modified to N6-acetyllysine: Lys539, Lys542, and Lys544. Ser550 carries the phosphoserine modification. Residues 550–609 (SGSKRPKVEYSEEELKTHISKGTLGKFTVPMLKEACRAYGLKSGLKKQELLEALTKHFQD) are interaction with DEAF1. Lys553 and Lys556 each carry N6-acetyllysine. Lys556 participates in a covalent cross-link: Glycyl lysine isopeptide (Lys-Gly) (interchain with G-Cter in SUMO2). Ser560 carries the post-translational modification Phosphoserine. Position 570 is an N6,N6,N6-trimethyllysine (Lys570). One can recognise an SAP domain in the interval 573 to 607 (LGKFTVPMLKEACRAYGLKSGLKKQELLEALTKHF). An interaction with BAX region spans residues 578-583 (VPMLKE).

It belongs to the ku70 family. In terms of assembly, forms a heterodimer with XRCC5/Ku80; heterodimerization stabilizes XRCC5 protein. Component of the core long-range non-homologous end joining (NHEJ) complex (also named DNA-PK complex) composed of PRKDC, LIG4, XRCC4, XRCC6/Ku70, XRCC5/Ku86 and NHEJ1/XLF. Additional component of the NHEJ complex includes PAXX. Following autophosphorylation, PRKDC dissociates from DNA, leading to formation of the short-range NHEJ complex, composed of LIG4, XRCC4, XRCC6/Ku70, XRCC5/Ku86 and NHEJ1/XLF. The XRCC5-XRCC6 dimer also associates with NAA15, and this complex binds to the osteocalcin promoter and activates osteocalcin expression. In addition, XRCC6 interacts with the osteoblast-specific transcription factors MSX2, RUNX2 and DLX5. Interacts with ELF3. Interacts with ATP23. The XRCC5-XRRC6 dimer associates in a DNA-dependent manner with APEX1. Binds to CDK9 isoform 2. Identified in a complex with DEAF1 and XRCC5. Interacts with DEAF1 (via the SAND domain); the interaction is direct and may be inhibited by DNA-binding. Interacts with CLU. Interacts with NR4A3; the DNA-dependent protein kinase complex DNA-PK phosphorylates and activates NR4A3 and prevents NR4A3 ubiquitinylation and degradation. Interacts with CYREN isoform 1 (CYREN-1) and isoform 4 (CYREN-2) (via KBM motif). Interacts (via N-terminus) with HSF1 (via N-terminus); this interaction is direct and prevents XRCC5/XRCC6 heterodimeric binding and non-homologous end joining (NHEJ) repair activities induced by ionizing radiation (IR). Part of the HDP-RNP complex composed of at least HEXIM1, PRKDC, XRCC5, XRCC6, paraspeckle proteins (SFPQ, NONO, PSPC1, RBM14, and MATR3) and NEAT1 RNA. Interacts with HMBOX1. Interacts with ATF7. Interacts with APLF (via KBM motif). Interacts with WRN (via KBM motif). The XRCC5-XRCC6 dimer associates with ALKBH2. Interacts with TPRN; TPRN interacts with a number of DNA damage response proteins, is recruited to sites of DNA damage and may play a role in DNA damage repair. When not acetylated, interacts with BAX. Interacts with ERCC6L2. (Microbial infection) Interacts with human T-cell leukemia virus 1/HTLV-1 protein HBZ. Post-translationally, phosphorylation by PRKDC may enhance helicase activity. Phosphorylation of Ser-51 does not affect DNA repair. ADP-ribosylated by PARP3. In terms of processing, methylation by SETD4 leads to accumulation in the cytoplasm and is a prerequisite for acetylation, possibly due to the change of subcellular from the nucleus to the cytosol initiated by methylation, acetylation occurring in the cytosol. Post-translationally, acetylation can be catalyzed in vitro by CREBBP/CBP and KAT2B/PCAF.

The protein resides in the nucleus. The protein localises to the chromosome. It is found in the cytoplasm. Its function is as follows. Single-stranded DNA-dependent ATP-dependent helicase that plays a key role in DNA non-homologous end joining (NHEJ) by recruiting DNA-PK to DNA. Required for double-strand break repair and V(D)J recombination. Also has a role in chromosome translocation. Has a role in chromosome translocation. The DNA helicase II complex binds preferentially to fork-like ends of double-stranded DNA in a cell cycle-dependent manner. It works in the 3'-5' direction. During NHEJ, the XRCC5-XRRC6 dimer performs the recognition step: it recognizes and binds to the broken ends of the DNA and protects them from further resection. Binding to DNA may be mediated by XRCC6. The XRCC5-XRRC6 dimer acts as a regulatory subunit of the DNA-dependent protein kinase complex DNA-PK by increasing the affinity of the catalytic subunit PRKDC to DNA by 100-fold. The XRCC5-XRRC6 dimer is probably involved in stabilizing broken DNA ends and bringing them together. The assembly of the DNA-PK complex to DNA ends is required for the NHEJ ligation step. Probably also acts as a 5'-deoxyribose-5-phosphate lyase (5'-dRP lyase), by catalyzing the beta-elimination of the 5' deoxyribose-5-phosphate at an abasic site near double-strand breaks. 5'-dRP lyase activity allows to 'clean' the termini of abasic sites, a class of nucleotide damage commonly associated with strand breaks, before such broken ends can be joined. The XRCC5-XRRC6 dimer together with APEX1 acts as a negative regulator of transcription. In association with NAA15, the XRCC5-XRRC6 dimer binds to the osteocalcin promoter and activates osteocalcin expression. Plays a role in the regulation of DNA virus-mediated innate immune response by assembling into the HDP-RNP complex, a complex that serves as a platform for IRF3 phosphorylation and subsequent innate immune response activation through the cGAS-STING pathway. Negatively regulates apoptosis by interacting with BAX and sequestering it from the mitochondria. Might have deubiquitination activity, acting on BAX. This Homo sapiens (Human) protein is X-ray repair cross-complementing protein 6 (XRCC6).